Here is a 721-residue protein sequence, read N- to C-terminus: Methionine--tRNA ligase (721 aa).

The 'HIGH' region signature appears at 27-37 (PYANGQIHIGH). Residues Cys-158, Cys-161, Cys-171, and Cys-174 each coordinate Zn(2+). A 'KMSKS' region motif is present at residues 348–352 (KMSKS). Lys-351 contributes to the ATP binding site. The region spanning 615–721 (DFAKIDLRIA…SGAKPGMRVK (107 aa)) is the tRNA-binding domain.

It belongs to the class-I aminoacyl-tRNA synthetase family. MetG type 1 subfamily. In terms of assembly, homodimer. The cofactor is Zn(2+).

The protein resides in the cytoplasm. It carries out the reaction tRNA(Met) + L-methionine + ATP = L-methionyl-tRNA(Met) + AMP + diphosphate. Functionally, is required not only for elongation of protein synthesis but also for the initiation of all mRNA translation through initiator tRNA(fMet) aminoacylation. The protein is Methionine--tRNA ligase of Burkholderia vietnamiensis (strain G4 / LMG 22486) (Burkholderia cepacia (strain R1808)).